The following is a 315-amino-acid chain: Ribose-phosphate pyrophosphokinase (315 aa).

ATP contacts are provided by residues 37–39 and 96–97; these read DGE and RQ. Residues H131 and D170 each contribute to the Mg(2+) site. Residue K194 is part of the active site. D-ribose 5-phosphate-binding positions include R196, D220, and 224–228; that span reads DTGGT.

It belongs to the ribose-phosphate pyrophosphokinase family. Class I subfamily. Homohexamer. Mg(2+) is required as a cofactor.

The protein localises to the cytoplasm. The enzyme catalyses D-ribose 5-phosphate + ATP = 5-phospho-alpha-D-ribose 1-diphosphate + AMP + H(+). Its pathway is metabolic intermediate biosynthesis; 5-phospho-alpha-D-ribose 1-diphosphate biosynthesis; 5-phospho-alpha-D-ribose 1-diphosphate from D-ribose 5-phosphate (route I): step 1/1. Its function is as follows. Involved in the biosynthesis of the central metabolite phospho-alpha-D-ribosyl-1-pyrophosphate (PRPP) via the transfer of pyrophosphoryl group from ATP to 1-hydroxyl of ribose-5-phosphate (Rib-5-P). The chain is Ribose-phosphate pyrophosphokinase from Photorhabdus laumondii subsp. laumondii (strain DSM 15139 / CIP 105565 / TT01) (Photorhabdus luminescens subsp. laumondii).